A 39-amino-acid polypeptide reads, in one-letter code: Gas vesicle protein C (39 aa).

This sequence belongs to the gas vesicle GvpC family.

The protein resides in the gas vesicle. In terms of biological role, confers stability, involved in shaping gas vesicles, hollow, gas filled proteinaceous nanostructures. During planktonic growth they allow positioning of the organism at a favorable depth for light or nutrient acquisition. The protein is Gas vesicle protein C of Spirulina sp. (strain CCAP 1475/10).